Reading from the N-terminus, the 75-residue chain is Exodeoxyribonuclease 7 small subunit (75 aa).

It belongs to the XseB family. As to quaternary structure, heterooligomer composed of large and small subunits.

It is found in the cytoplasm. It catalyses the reaction Exonucleolytic cleavage in either 5'- to 3'- or 3'- to 5'-direction to yield nucleoside 5'-phosphates.. Functionally, bidirectionally degrades single-stranded DNA into large acid-insoluble oligonucleotides, which are then degraded further into small acid-soluble oligonucleotides. This Pelobacter propionicus (strain DSM 2379 / NBRC 103807 / OttBd1) protein is Exodeoxyribonuclease 7 small subunit.